Here is a 299-residue protein sequence, read N- to C-terminus: 4-diphosphocytidyl-2-C-methyl-D-erythritol kinase (299 aa).

Residue lysine 20 is part of the active site. ATP is bound at residue 106-116; it reads PMGGGLGGGSS. Aspartate 148 is a catalytic residue.

It belongs to the GHMP kinase family. IspE subfamily. As to quaternary structure, homodimer.

It carries out the reaction 4-CDP-2-C-methyl-D-erythritol + ATP = 4-CDP-2-C-methyl-D-erythritol 2-phosphate + ADP + H(+). It participates in isoprenoid biosynthesis; isopentenyl diphosphate biosynthesis via DXP pathway; isopentenyl diphosphate from 1-deoxy-D-xylulose 5-phosphate: step 3/6. Functionally, catalyzes the phosphorylation of the position 2 hydroxy group of 4-diphosphocytidyl-2C-methyl-D-erythritol. This is 4-diphosphocytidyl-2-C-methyl-D-erythritol kinase from Yersinia pseudotuberculosis serotype O:1b (strain IP 31758).